The sequence spans 211 residues: MSLSDIQQAILSLITNHINADGVSPSQTEIARAFGFKGVRAVQHHLDVLEQQGMIRRVPGQARGIRLKHLTQVDEAALALQSEDVLRLPVLGRVAAGQPIGADIGEDRVVLLDRVFFSPAPDYLLRVQGDSMRDEGIFDGDLIGVHRTHDAHSGQIVVARIDDEITVKLLKISKDRIRLLPRNPDFAPIEVRSDQDFAIEGLYCGLLRPNR.

A DNA-binding region (H-T-H motif) is located at residues 27 to 47 (QTEIARAFGFKGVRAVQHHLD). Residues Ser131 and Lys168 each act as for autocatalytic cleavage activity in the active site.

This sequence belongs to the peptidase S24 family. Homodimer.

The enzyme catalyses Hydrolysis of Ala-|-Gly bond in repressor LexA.. Its function is as follows. Represses a number of genes involved in the response to DNA damage (SOS response), including recA and lexA. In the presence of single-stranded DNA, RecA interacts with LexA causing an autocatalytic cleavage which disrupts the DNA-binding part of LexA, leading to derepression of the SOS regulon and eventually DNA repair. The chain is LexA repressor from Xylella fastidiosa (strain M12).